We begin with the raw amino-acid sequence, 489 residues long: uncharacterized protein (489 aa).

Transmembrane regions (helical) follow at residues 14–34 (LLFV…ISLF), 36–56 (LGPF…IVTL), 100–120 (IIGP…FSGI), 127–147 (LVNT…LAFI), 158–178 (LIAL…IVAI), 203–223 (EISF…YAGV), 241–261 (ILIV…IILN), 286–306 (AAGL…NVST), 344–364 (IWFT…IPLV), 380–400 (VGSA…FKFI), 419–439 (LFCL…FPVI), and 449–469 (HTLT…LFLL).

This sequence to M.genitalium MG226.

It is found in the cell membrane. This is an uncharacterized protein from Mycoplasma genitalium (strain ATCC 33530 / DSM 19775 / NCTC 10195 / G37) (Mycoplasmoides genitalium).